A 382-amino-acid chain; its full sequence is MQIPFSSSSSTSLGIEWELQLVDQQSRELRGEASGILHELRAKVGECEAAKAKHELFESTIEVITGVCDSVEEATADLSGTVSLLRDLAERRGIGLMCSGTHPASDYMGQRITEDHRYFRLVSQMQWLARRLLIFGVHVHVGVRSADKAMPIVNALMAYVPHFLALSASSPYWLGGDTGLASSRSQVFASLPTAGLPYPLEDWPGFESFMETLIVSGTIETIREVWWDIRPHPNFGTVELRVCDGLPSLMEVGAVAALAQCLVDRMNTQIDRGYRLPTPQRWLVQENKWRAARYGLDAQIIVDGRGGIRPVRDDITDLVEDLLPVAHRLGCSSELSDTLTILRTGASYIRQRDAARRAGGDLTRVVDTLLEEMNTGRPVVDG.

It belongs to the glutamate--cysteine ligase type 2 family. YbdK subfamily.

It catalyses the reaction L-cysteine + L-glutamate + ATP = gamma-L-glutamyl-L-cysteine + ADP + phosphate + H(+). In terms of biological role, ATP-dependent carboxylate-amine ligase which exhibits weak glutamate--cysteine ligase activity. This chain is Putative glutamate--cysteine ligase 2-1, found in Frankia casuarinae (strain DSM 45818 / CECT 9043 / HFP020203 / CcI3).